The sequence spans 505 residues: ATP synthase subunit alpha, cyanelle (505 aa).

Position 170-177 (170-177) interacts with ATP; sequence GDRQTGKT.

It belongs to the ATPase alpha/beta chains family. As to quaternary structure, F-type ATPases have 2 components, CF(1) - the catalytic core - and CF(0) - the membrane proton channel. CF(1) has five subunits: alpha(3), beta(3), gamma(1), delta(1), epsilon(1). CF(0) has four main subunits: a, b, b' and c.

It is found in the plastid. Its subcellular location is the cyanelle thylakoid membrane. The catalysed reaction is ATP + H2O + 4 H(+)(in) = ADP + phosphate + 5 H(+)(out). Functionally, produces ATP from ADP in the presence of a proton gradient across the membrane. The alpha chain is a regulatory subunit. This is ATP synthase subunit alpha, cyanelle from Cyanophora paradoxa.